A 194-amino-acid chain; its full sequence is Porimin (194 aa).

Residues 1–24 (MALCARAALLLGALQVLALPGAVA) form the signal peptide. The Extracellular segment spans residues 25 to 151 (QETYAQGSPS…PTKGKGSKFD (127 aa)). N-linked (GlcNAc...) asparagine glycosylation is found at Asn-36, Asn-47, Asn-51, Asn-59, Asn-76, and Asn-114. The disordered stretch occupies residues 88–124 (KVSTPGVSPHVTPSASKSTPKTSASPNSTQTSASMTT). Low complexity predominate over residues 99–124 (TPSASKSTPKTSASPNSTQTSASMTT). The chain crosses the membrane as a helical span at residues 152 to 172 (AGSFVGGIVLTLGVLSILYIG). Residues 173-194 (CKMYYSRRGIRYRSIDEHDAII) are Cytoplasmic-facing. Phosphoserine is present on Ser-186.

The protein belongs to the CD164 family.

The protein localises to the membrane. Functionally, implicated in oncotic cell death, characterized by cell swelling, organelle swelling, vacuolization and increased membrane permeability. The chain is Porimin (Tmem123) from Rattus norvegicus (Rat).